The primary structure comprises 2485 residues: Tyrosine-protein phosphatase non-receptor type 13 (2485 aa).

A KIND domain is found at 3 to 190; that stretch reads VSLAEALEVR…SGTDQLSCNS (188 aa). A disordered region spans residues 186-220; sequence LSCNSEQKPDRSQAIRDRLRGKGLPTGRSSTSDVL. Over residues 192-205 the composition is skewed to basic and acidic residues; it reads QKPDRSQAIRDRLR. The residue at position 240 (S240) is a Phosphoserine. The interval 260–283 is disordered; the sequence is SDNSGREDSENTFSPYQFKTSGPE. Residues 270 to 279 show a composition bias toward polar residues; that stretch reads NTFSPYQFKT. Phosphoserine is present on residues S301 and S302. Residues 433-467 are disordered; sequence RSEASKRFESSSGLPGVDETLSQGQSQRPSRQYET. The span at 452-465 shows a compositional bias: polar residues; that stretch reads TLSQGQSQRPSRQY. Residues 469-504 adopt a coiled-coil conformation; it reads FEGNLINQEIMLKRQEEELMQLQAKMALRQSRLSLY. In terms of domain architecture, FERM spans 572–872; the sequence is RKVNIMLLNG…YQHKFQLQMR (301 aa). A phosphoserine mark is found at S890, S897, S908, S911, and S914. 2 disordered regions span residues 947 to 975 and 995 to 1049; these read QNSS…DLSQ and TVAE…IEDP. A compositionally biased stretch (basic and acidic residues) spans 950-971; sequence SKEKNDKASWEEKPREMSKSYH. Over residues 1020 to 1032 the composition is skewed to polar residues; sequence KLNNSKSVASLNR. Phosphoserine is present on residues S1029, S1033, and S1085. Over residues 1033–1042 the composition is skewed to basic and acidic residues; the sequence is SPERRKHESD. The PDZ 1 domain occupies 1093-1178; it reads LVNLKKDAKY…EDVTLVISQP (86 aa). 2 disordered regions span residues 1227-1258 and 1273-1362; these read HISE…SLSQ and TWQE…SPPK. 3 stretches are compositionally biased toward polar residues: residues 1243–1258, 1273–1288, and 1327–1359; these read SLSS…SLSQ, TWQE…SVIS, and TYSS…FSSS. 2 consecutive PDZ domains span residues 1368-1452 and 1501-1588; these read EVEL…LEKG and EVKL…LCRP. Residues 1608–1630 show a composition bias toward polar residues; it reads AQVLPNSSKDSSQPSCVEQSTSS. Disordered stretches follow at residues 1608-1665 and 1715-1751; these read AQVL…DLVT and PNKP…SSMD. Low complexity predominate over residues 1736-1749; sequence QSYQPQSESASSSS. PDZ domains are found at residues 1788 to 1868 and 1882 to 1965; these read LITL…IGRV and PDIT…ATRN. Residues 1971–1996 form a disordered region; that stretch reads PSSKRSAVSAPKSTKGNGSYSVGSCS. Residues 1973–1996 show a composition bias toward polar residues; it reads SKRSAVSAPKSTKGNGSYSVGSCS. A Tyrosine-protein phosphatase domain is found at 2213-2467; the sequence is PSKELENLQE…IFCYQVILYV (255 aa). Substrate-binding positions include D2378, 2408-2414, and Q2452; that span reads CSAGIGR. The active-site Phosphocysteine intermediate is the C2408. Positions 2408-2414 are substrate; the sequence is CSAGIGR.

It belongs to the protein-tyrosine phosphatase family. Non-receptor class subfamily. Interacts (via the first PDZ domain) with PLEKHA1 and PLEKHA2. Interacts (via the second PDZ domain) with TNFRSF6 (Fas receptor) (via C-terminus). Interacts (via the second PDZ domain) with TRIP6 (via the third LIM domain and C-terminus). Interacts (via the third PDZ domain) with NGFR (via C-terminal SVP motif) and PKN2 (via C-terminus). Interacts (via the second or fourth PDZ domains) with PDLIM4 (via C-terminus only or via combined C-terminus and LIM domain, but not LIM domain only). Found in a complex with PDLIM4 and TRIP6. Interacts with PDLIM4; this interaction results in dephosphorylation of SRC 'Tyr-419' by this protein leading to its inactivation. Interacts with BRD7. Interacts with RAPGEF6. Interacts with ARHGAP29. Interacts with PIK3R2; dephosphorylates PIK3R2. Interacts with FBXL2. Interacts (via the FERM domain) with ENTR1. Found in a complex with ENTR1, PTPN13 and GIT1. As to expression, expressed in keratinocytes (at protein level). Present in most tissues with the exception of the liver and skeletal muscle. Most abundant in lung, kidney and fetal brain.

Its subcellular location is the cytoplasm. It localises to the cytoskeleton. The protein localises to the nucleus. The protein resides in the cell projection. It is found in the lamellipodium. The enzyme catalyses O-phospho-L-tyrosyl-[protein] + H2O = L-tyrosyl-[protein] + phosphate. In terms of biological role, tyrosine phosphatase which negatively regulates FAS-induced apoptosis and NGFR-mediated pro-apoptotic signaling. May regulate phosphoinositide 3-kinase (PI3K) signaling through dephosphorylation of PIK3R2. The sequence is that of Tyrosine-protein phosphatase non-receptor type 13 (PTPN13) from Homo sapiens (Human).